The following is an 89-amino-acid chain: uncharacterized protein (89 aa).

2 stretches are compositionally biased toward basic residues: residues Met-1–His-17 and His-65–His-89. Disordered stretches follow at residues Met-1–Val-25 and Leu-60–His-89.

This is an uncharacterized protein from Dictyostelium discoideum (Social amoeba).